The following is a 183-amino-acid chain: Gamma-crystallin N (183 aa).

Beta/gamma crystallin 'Greek key' domains are found at residues 6–46 (GKII…RVET), 47–89 (GAWI…KPVR), 95–136 (YRLE…KVYG), and 138–180 (GAWV…RRVV).

This sequence belongs to the beta/gamma-crystallin family. Monomer.

Functionally, crystallins are the dominant structural components of the vertebrate eye lens. This is Gamma-crystallin N (crygn) from Xenopus tropicalis (Western clawed frog).